A 338-amino-acid chain; its full sequence is Holliday junction branch migration complex subunit RuvB (338 aa).

A large ATPase domain (RuvB-L) region spans residues 1-181 (MEERILTQNF…FGVINRLDYY (181 aa)). ATP contacts are provided by residues leucine 20, arginine 21, glycine 62, lysine 65, threonine 66, threonine 67, 128–130 (EDF), arginine 171, tyrosine 181, and arginine 218. Position 66 (threonine 66) interacts with Mg(2+). Residues 182–252 (SVEELKEIIK…TANIALNMLG (71 aa)) are small ATPAse domain (RuvB-S). Residues 255–338 (EMGLEEIDRK…YVEQRRIEDV (84 aa)) are head domain (RuvB-H). DNA is bound by residues arginine 310 and arginine 315.

Belongs to the RuvB family. In terms of assembly, homohexamer. Forms an RuvA(8)-RuvB(12)-Holliday junction (HJ) complex. HJ DNA is sandwiched between 2 RuvA tetramers; dsDNA enters through RuvA and exits via RuvB. An RuvB hexamer assembles on each DNA strand where it exits the tetramer. Each RuvB hexamer is contacted by two RuvA subunits (via domain III) on 2 adjacent RuvB subunits; this complex drives branch migration. In the full resolvosome a probable DNA-RuvA(4)-RuvB(12)-RuvC(2) complex forms which resolves the HJ.

The protein localises to the cytoplasm. It catalyses the reaction ATP + H2O = ADP + phosphate + H(+). Its function is as follows. The RuvA-RuvB-RuvC complex processes Holliday junction (HJ) DNA during genetic recombination and DNA repair, while the RuvA-RuvB complex plays an important role in the rescue of blocked DNA replication forks via replication fork reversal (RFR). RuvA specifically binds to HJ cruciform DNA, conferring on it an open structure. The RuvB hexamer acts as an ATP-dependent pump, pulling dsDNA into and through the RuvAB complex. RuvB forms 2 homohexamers on either side of HJ DNA bound by 1 or 2 RuvA tetramers; 4 subunits per hexamer contact DNA at a time. Coordinated motions by a converter formed by DNA-disengaged RuvB subunits stimulates ATP hydrolysis and nucleotide exchange. Immobilization of the converter enables RuvB to convert the ATP-contained energy into a lever motion, pulling 2 nucleotides of DNA out of the RuvA tetramer per ATP hydrolyzed, thus driving DNA branch migration. The RuvB motors rotate together with the DNA substrate, which together with the progressing nucleotide cycle form the mechanistic basis for DNA recombination by continuous HJ branch migration. Branch migration allows RuvC to scan DNA until it finds its consensus sequence, where it cleaves and resolves cruciform DNA. In Caldanaerobacter subterraneus subsp. tengcongensis (strain DSM 15242 / JCM 11007 / NBRC 100824 / MB4) (Thermoanaerobacter tengcongensis), this protein is Holliday junction branch migration complex subunit RuvB.